The sequence spans 383 residues: MSTTHETPEATAEGDKPCIAVVFGGRSSEHSISLITARSVLRAIDRDRWDVVSVGISTDGAWFLCSQEELEALLDDQPMAQLPVGVHRVSLPLQTGDSRLLIHDTSEHGAPLSRGRHIDAVFPLLHGPFGEDGTLQGMLELADLPYVGCGVAASAIGMDKHFMKLAFQAAGLEVGPYTVVHDRTWRTDPLGVREAVAELGFPVFVKPARAGSSFGITRVDEPSQLDAAIATAREHDLKLVVEAGIDGREIECAVLGGHGTDEARASLPGEIEVHGHALYDFEAKYVESDGATLSCPARLPEHVIDTLRRDAVRAFHAVDGEGLSRCDFFVTADERVLINEINTMPGFTPISMYPRMWAASGIDYSALIDELITLALERPVGLR.

In terms of domain architecture, ATP-grasp spans 164 to 373 (KLAFQAAGLE…YSALIDELIT (210 aa)). 196-251 (VAELGFPVFVKPARAGSSFGITRVDEPSQLDAAIATAREHDLKLVVEAGIDGREIE) lines the ATP pocket. Residues D327, E340, and N342 each contribute to the Mg(2+) site.

It belongs to the D-alanine--D-alanine ligase family. Mg(2+) serves as cofactor. Requires Mn(2+) as cofactor.

It is found in the cytoplasm. The catalysed reaction is 2 D-alanine + ATP = D-alanyl-D-alanine + ADP + phosphate + H(+). It functions in the pathway cell wall biogenesis; peptidoglycan biosynthesis. Functionally, cell wall formation. The protein is D-alanine--D-alanine ligase of Kocuria rhizophila (strain ATCC 9341 / DSM 348 / NBRC 103217 / DC2201).